The primary structure comprises 406 residues: Cysteine desulfurase (406 aa).

Lys226 bears the N6-(pyridoxal phosphate)lysine mark. Cys364 serves as the catalytic Cysteine persulfide intermediate.

It belongs to the class-V pyridoxal-phosphate-dependent aminotransferase family. Csd subfamily. In terms of assembly, homodimer. Interacts with SufE and the SufBCD complex composed of SufB, SufC and SufD. The interaction with SufE is required to mediate the direct transfer of the sulfur atom from the S-sulfanylcysteine. Pyridoxal 5'-phosphate serves as cofactor.

It localises to the cytoplasm. It catalyses the reaction (sulfur carrier)-H + L-cysteine = (sulfur carrier)-SH + L-alanine. The catalysed reaction is L-selenocysteine + AH2 = hydrogenselenide + L-alanine + A + H(+). It functions in the pathway cofactor biosynthesis; iron-sulfur cluster biosynthesis. In terms of biological role, cysteine desulfurases mobilize the sulfur from L-cysteine to yield L-alanine, an essential step in sulfur metabolism for biosynthesis of a variety of sulfur-containing biomolecules. Component of the suf operon, which is activated and required under specific conditions such as oxidative stress and iron limitation. Acts as a potent selenocysteine lyase in vitro, that mobilizes selenium from L-selenocysteine. Selenocysteine lyase activity is however unsure in vivo. The chain is Cysteine desulfurase from Escherichia coli O45:K1 (strain S88 / ExPEC).